A 149-amino-acid polypeptide reads, in one-letter code: D-aminoacyl-tRNA deacylase (149 aa).

Positions 137-138 (GP) match the Gly-cisPro motif, important for rejection of L-amino acids motif.

It belongs to the DTD family. In terms of assembly, homodimer.

The protein resides in the cytoplasm. The enzyme catalyses glycyl-tRNA(Ala) + H2O = tRNA(Ala) + glycine + H(+). It carries out the reaction a D-aminoacyl-tRNA + H2O = a tRNA + a D-alpha-amino acid + H(+). Functionally, an aminoacyl-tRNA editing enzyme that deacylates mischarged D-aminoacyl-tRNAs. Also deacylates mischarged glycyl-tRNA(Ala), protecting cells against glycine mischarging by AlaRS. Acts via tRNA-based rather than protein-based catalysis; rejects L-amino acids rather than detecting D-amino acids in the active site. By recycling D-aminoacyl-tRNA to D-amino acids and free tRNA molecules, this enzyme counteracts the toxicity associated with the formation of D-aminoacyl-tRNA entities in vivo and helps enforce protein L-homochirality. This chain is D-aminoacyl-tRNA deacylase, found in Clostridium tetani (strain Massachusetts / E88).